Here is a 105-residue protein sequence, read N- to C-terminus: SH3 domain-binding glutamic acid-rich-like protein 2 (105 aa).

The SH3-binding motif lies at 61–67 (KGNPLPP).

It belongs to the SH3BGR family.

It localises to the nucleus. This is SH3 domain-binding glutamic acid-rich-like protein 2 (sh3bgrl2) from Danio rerio (Zebrafish).